A 3901-amino-acid chain; its full sequence is Nonribosomal peptide synthetase opaA (3901 aa).

Residues 248 to 641 (HNAQHHPSVV…HRKDNQIKIR (394 aa)) form an adenylation 1 region. The region spanning 780–854 (LPVTANEIVV…DMATRLTRIK (75 aa)) is the Carrier 1 domain. Serine 815 carries the O-(pantetheine 4'-phosphoryl)serine modification. The tract at residues 891-1164 (DAYPCSALQE…IATVPIRINL (274 aa)) is condensation 1. An adenylation 2 region spans residues 1328–1725 (QSHAQKTPKS…GRIGNQVKLR (398 aa)). The 79-residue stretch at 1858 to 1936 (RTPLDTERDL…QIAAQAATRA (79 aa)) folds into the Carrier 2 domain. An O-(pantetheine 4'-phosphoryl)serine modification is found at serine 1895. Residues 1953-2261 (KLTPIQQLFF…KDARRRLTRN (309 aa)) form an epimerase region. The interval 2403 to 2826 (ENLYPCAPIQ…LVSTDHKRLL (424 aa)) is condensation 2. An adenylation 3 region spans residues 2846 to 3243 (QQHVRETPDA…GRKDSQIKIR (398 aa)). One can recognise a Carrier 3 domain in the interval 3375–3451 (LPSTAGEQLL…ALAARSRSKD (77 aa)). Serine 3412 is subject to O-(pantetheine 4'-phosphoryl)serine. A condensation 3 region spans residues 3509–3837 (HHFSFAVEGK…EDLKTHFTLN (329 aa)).

Belongs to the NRP synthetase family.

In terms of biological role, nonribosomal peptide synthetase; part of the gene cluster that mediates the biosynthesis of oxepinamides, derivatives of anthranilyl-containing tripeptides that share an oxepin ring and a fused pyrimidinone moiety. The nonribosomal peptide synthetase (NRPS) opaA assembles the quinazolinone core with D-Phe incorporation. The first adenylation domain (A1) of opaA loads and activates anthranilic acid whereas the second A domain (A2) is for activating of L-Phe, which is then converted to D-form by the E domain. The third A domain (A3) is responsible for L-Ile activation and the terminal condensation domain C3 for cyclization and releasing the NRPS product protuboxepin K. The cytochrome P450 monooxygenase opaB then catalyzes alone the oxepin ring formation to convert protuboxepin K into protuboxepin A. The flavoenzyme opaC installs subsequently one hydroxyl group at the oxepin ring, accompanied by double bond migration, to form 15-epi-oxepinamide E. The epimerase opaE changes the D-Phe residue back to L-form, leading to oxepinamide E, which is further methylated at the hydroxyl group at C-12 by the O-methyltransferase OpaF to yield oxepinamide F. This chain is Nonribosomal peptide synthetase opaA, found in Aspergillus ustus.